A 943-amino-acid chain; its full sequence is Translation initiation factor IF-2 (943 aa).

Residues 99–113 show a composition bias toward low complexity; sequence VKAAQTQAAPVQPEQ. A disordered region spans residues 99 to 354; that stretch reads VKAAQTQAAP…LEPNQHAFQA (256 aa). A compositionally biased stretch (basic and acidic residues) spans 117 to 141; sequence DAVKARAEAAARAEARAKAEAEAAK. Residues 145 to 172 show a composition bias toward low complexity; that stretch reads AKAGNKAKPAAQKPTEAKAETAPVAAET. A compositionally biased stretch (basic and acidic residues) spans 173–197; that stretch reads KPAEPKEKAVKPKHERNGKGKDAKK. Positions 200–215 are enriched in low complexity; the sequence is KPAAPAVPQPVVSAEE. Over residues 216-250 the composition is skewed to basic and acidic residues; the sequence is QAQRDEEARRAAALRAHQEALLKEKQERQARREAM. A compositionally biased stretch (low complexity) spans 251 to 264; it reads KQQAEQQAKAAQEA. Composition is skewed to basic and acidic residues over residues 295 to 308 and 319 to 335; these read AKKEDRRNRDDEGQ and GGRDRNNARNGGDERVR. The tr-type G domain occupies 443-612; sequence PRPPVVTVMG…LLEAEVLELT (170 aa). The G1 stretch occupies residues 452-459; that stretch reads GHVDHGKT. A GTP-binding site is contributed by 452-459; sequence GHVDHGKT. Residues 477 to 481 are G2; sequence GITQH. The interval 498-501 is G3; that stretch reads DTPG. Residues 498–502 and 552–555 contribute to the GTP site; these read DTPGH and NKID. A G4 region spans residues 552 to 555; sequence NKID. The interval 588–590 is G5; it reads SAK.

The protein belongs to the TRAFAC class translation factor GTPase superfamily. Classic translation factor GTPase family. IF-2 subfamily.

It localises to the cytoplasm. Its function is as follows. One of the essential components for the initiation of protein synthesis. Protects formylmethionyl-tRNA from spontaneous hydrolysis and promotes its binding to the 30S ribosomal subunits. Also involved in the hydrolysis of GTP during the formation of the 70S ribosomal complex. This is Translation initiation factor IF-2 from Neisseria gonorrhoeae (strain ATCC 700825 / FA 1090).